Here is a 326-residue protein sequence, read N- to C-terminus: Vitamin B12 import system permease protein BtuC (326 aa).

9 helical membrane passes run 15–35, 61–81, 88–108, 112–132, 146–166, 184–204, 240–260, 274–294, and 302–322; these read WLLS…CAGE, LAVL…QALF, PGLL…VLLG, LPGW…TLIL, LLAG…AIYF, GGVD…LIWI, GWMV…GLVI, VLLP…DVVA, and ELPI…WLLL.

This sequence belongs to the binding-protein-dependent transport system permease family. FecCD subfamily. The complex is composed of two ATP-binding proteins (BtuD), two transmembrane proteins (BtuC) and a solute-binding protein (BtuF).

It localises to the cell inner membrane. Functionally, part of the ABC transporter complex BtuCDF involved in vitamin B12 import. Involved in the translocation of the substrate across the membrane. This Salmonella choleraesuis (strain SC-B67) protein is Vitamin B12 import system permease protein BtuC.